A 117-amino-acid chain; its full sequence is Large ribosomal subunit protein bL20 (117 aa).

This sequence belongs to the bacterial ribosomal protein bL20 family.

In terms of biological role, binds directly to 23S ribosomal RNA and is necessary for the in vitro assembly process of the 50S ribosomal subunit. It is not involved in the protein synthesizing functions of that subunit. The chain is Large ribosomal subunit protein bL20 from Mycoplasma mobile (strain ATCC 43663 / 163K / NCTC 11711) (Mesomycoplasma mobile).